A 582-amino-acid chain; its full sequence is 15-cis-phytoene desaturase, chloroplastic/chromoplastic (582 aa).

Residues 1–93 (MNLLGSISTG…ELENTINFLE (93 aa)) constitute a chloroplast and chromoplast transit peptide. Residues A121, 140–141 (EA), K148, 165–166 (HI), and Y171 contribute to the FAD site. R306 contacts substrate. Residue D537 participates in FAD binding. A545 is a substrate binding site. An FAD-binding site is contributed by M547.

Belongs to the carotenoid/retinoid oxidoreductase family. In terms of assembly, homotetramer. The cofactor is FAD. Expressed in flower buds and lips. Lower expression in leaves and roots.

It is found in the plastid. It localises to the chloroplast. Its subcellular location is the chromoplast. The protein resides in the membrane. It catalyses the reaction 2 a plastoquinone + 15-cis-phytoene = 9,9',15-tri-cis-zeta-carotene + 2 a plastoquinol. It functions in the pathway carotenoid biosynthesis; lycopene biosynthesis. Converts phytoene into zeta-carotene via the intermediary of phytofluene by the symmetrical introduction of two double bonds at the C-11 and C-11' positions of phytoene with a concomitant isomerization of two neighboring double bonds at the C9 and C9' positions from trans to cis. The chain is 15-cis-phytoene desaturase, chloroplastic/chromoplastic (PDS) from Oncidium hybrid cultivar (Orchid).